The chain runs to 470 residues: Pyruvate kinase I (470 aa).

Residue Arg-32 participates in substrate binding. Positions 34, 36, 66, and 67 each coordinate K(+). An ATP-binding site is contributed by 34-37; that stretch reads NFSH. Arg-73 serves as a coordination point for ATP. Lys-76 carries the N6-acetyllysine modification. An ATP-binding site is contributed by Lys-156. Residue Glu-222 participates in Mg(2+) binding. Positions 245, 246, and 278 each coordinate substrate. Asp-246 is a binding site for Mg(2+). N6-acetyllysine is present on Lys-319.

This sequence belongs to the pyruvate kinase family. In terms of assembly, homotetramer. Mg(2+) is required as a cofactor. Requires K(+) as cofactor.

It catalyses the reaction pyruvate + ATP = phosphoenolpyruvate + ADP + H(+). Its pathway is carbohydrate degradation; glycolysis; pyruvate from D-glyceraldehyde 3-phosphate: step 5/5. This is Pyruvate kinase I (pykF) from Escherichia coli O157:H7.